The following is a 252-amino-acid chain: 5'-nucleotidase SurE (252 aa).

4 residues coordinate a divalent metal cation: D8, D9, S39, and N91.

The protein belongs to the SurE nucleotidase family. The cofactor is a divalent metal cation.

It localises to the cytoplasm. It carries out the reaction a ribonucleoside 5'-phosphate + H2O = a ribonucleoside + phosphate. Its function is as follows. Nucleotidase that shows phosphatase activity on nucleoside 5'-monophosphates. In Legionella pneumophila (strain Paris), this protein is 5'-nucleotidase SurE.